We begin with the raw amino-acid sequence, 124 residues long: Ragulator complex protein LAMTOR3 (124 aa).

The interval 57-70 (TDQGSKLGLSKNKS) is required for interaction with LAMTOR2.

This sequence belongs to the LAMTOR3 family. In terms of assembly, part of the Ragulator complex composed of LAMTOR1, LAMTOR2, LAMTOR3, LAMTOR4 and LAMTOR5. LAMTOR4 and LAMTOR5 form a heterodimer that interacts, through LAMTOR1, with a LAMTOR2, LAMTOR3 heterodimer. The Ragulator complex interacts with both the mTORC1 complex and heterodimers constituted of the Rag GTPases RagA/RRAGA, RagB/RRAGB, RagC/RRAGC and RagD/RRAGD; regulated by amino acid availability. The Ragulator complex interacts with SLC38A9; the probable amino acid sensor. Interacts with LAMTOR1 and LAMTOR2; the interaction is direct. Component of the lysosomal folliculin complex (LFC), composed of FLCN, FNIP1 (or FNIP2), RagA/RRAGA or RagB/RRAGB GDP-bound, RagC/RRAGC or RagD/RRAGD GTP-bound, and Ragulator. Interacts with MAP2K1/MEK1 and MAPK2. Interacts with MORG1.

It localises to the late endosome membrane. Its function is as follows. As part of the Ragulator complex it is involved in amino acid sensing and activation of mTORC1, a signaling complex promoting cell growth in response to growth factors, energy levels, and amino acids. Activated by amino acids through a mechanism involving the lysosomal V-ATPase, the Ragulator plays a dual role for the small GTPases Rag (RagA/RRAGA, RagB/RRAGB, RagC/RRAGC and/or RagD/RRAGD): it (1) acts as a guanine nucleotide exchange factor (GEF), activating the small GTPases Rag and (2) mediates recruitment of Rag GTPases to the lysosome membrane. Activated Ragulator and Rag GTPases function as a scaffold recruiting mTORC1 to lysosomes where it is in turn activated. Adapter protein that enhances the efficiency of the MAP kinase cascade facilitating the activation of MAPK2. This Mus musculus (Mouse) protein is Ragulator complex protein LAMTOR3 (Lamtor3).